A 500-amino-acid polypeptide reads, in one-letter code: Glycerol kinase (500 aa).

An ADP-binding site is contributed by threonine 13. ATP contacts are provided by threonine 13, threonine 14, and serine 15. Position 13 (threonine 13) interacts with sn-glycerol 3-phosphate. An ADP-binding site is contributed by arginine 17. Sn-glycerol 3-phosphate is bound by residues arginine 83, glutamate 84, tyrosine 135, and aspartate 244. Glycerol contacts are provided by arginine 83, glutamate 84, tyrosine 135, aspartate 244, and glutamine 245. 2 residues coordinate ADP: threonine 266 and glycine 309. ATP-binding residues include threonine 266, glycine 309, glutamine 313, and glycine 410. 2 residues coordinate ADP: glycine 410 and asparagine 414.

This sequence belongs to the FGGY kinase family.

It catalyses the reaction glycerol + ATP = sn-glycerol 3-phosphate + ADP + H(+). It participates in polyol metabolism; glycerol degradation via glycerol kinase pathway; sn-glycerol 3-phosphate from glycerol: step 1/1. Its activity is regulated as follows. Inhibited by fructose 1,6-bisphosphate (FBP). Key enzyme in the regulation of glycerol uptake and metabolism. Catalyzes the phosphorylation of glycerol to yield sn-glycerol 3-phosphate. This chain is Glycerol kinase, found in Burkholderia ambifaria (strain MC40-6).